Here is a 244-residue protein sequence, read N- to C-terminus: ATP synthase subunit 4, mitochondrial (244 aa).

The transit peptide at 1–36 directs the protein to the mitochondrion; that stretch reads MSSKLFCLRSFPSVQRTAWQRLVLPSTRKFSLTPTT.

Belongs to the eukaryotic ATPase B chain family. In terms of assembly, F-type ATPases have 2 components, CF(1) - the catalytic core - and CF(0) - the membrane proton channel. In yeast, the dimeric form of ATP synthase consists of 17 polypeptides: alpha, beta, gamma, delta, epsilon, 4 (B), 5 (OSCP), 6 (A), 8, 9 (C), d, E (Tim11), f, g, h, i/j and k.

Its subcellular location is the mitochondrion. It is found in the mitochondrion inner membrane. Its function is as follows. Mitochondrial membrane ATP synthase (F(1)F(0) ATP synthase or Complex V) produces ATP from ADP in the presence of a proton gradient across the membrane which is generated by electron transport complexes of the respiratory chain. F-type ATPases consist of two structural domains, F(1) - containing the extramembraneous catalytic core, and F(0) - containing the membrane proton channel, linked together by a central stalk and a peripheral stalk. During catalysis, ATP synthesis in the catalytic domain of F(1) is coupled via a rotary mechanism of the central stalk subunits to proton translocation. Part of the complex F(0) domain and the peripheric stalk, which acts as a stator to hold the catalytic alpha(3)beta(3) subcomplex and subunit a/ATP6 static relative to the rotary elements. The polypeptide is ATP synthase subunit 4, mitochondrial (atp4) (Schizosaccharomyces pombe (strain 972 / ATCC 24843) (Fission yeast)).